Consider the following 207-residue polypeptide: Ras-related protein Rab-8A (207 aa).

The GTP site is built by S17, G18, V19, G20, K21, T22, C23, S35, S39, and T40. A Mg(2+)-binding site is contributed by T22. 2 consecutive short sequence motifs (switch) follow at residues 31–45 and 63–80; these read DAFNSTFISTIGIDF and DTAGQERFRTITTAYYRG. Residues T40 and D63 each coordinate Mg(2+). G66 contributes to the GTP binding site. T72 carries the phosphothreonine; by LRRK2 modification. 5 residues coordinate GTP: N121, K122, D124, A152, and K153. S181 and S185 each carry phosphoserine. C204 is modified (cysteine methyl ester). C204 carries the S-geranylgeranyl cysteine lipid modification. The propeptide at 205–207 is removed in mature form; that stretch reads SLL.

The protein belongs to the small GTPase superfamily. Rab family. In terms of assembly, interacts (GTP-bound form) with MICALL1; regulates RAB8A association with recycling endosomes. Interacts with MICALL2; competes with RAB13 and is involved in E-cadherin endocytic recycling. Interacts (GTP-bound form) with MICAL1, MICALCL, MICAL3 and EHBP1L1; two molecules of RAB8A can bind to one molecule of the effector protein; ternary complexes of RAB8A, RAB13 and either MICAL1 or EHBP1L1 are possible. Interacts (GTP-bound form) with EHBP1. Interacts with EHD1. Interacts with MAP4K2 and SYTL4. Interacts with SGSM1 and SGSM3. Interacts with RABIF, RIMS2, RPH3A and RPH3A. Interacts with OPTN. Interacts with MYO5B. Interacts with CIMAP3. Interacts with BIRC6/bruce. Interacts with OCRL. Interacts with AHI1. Interacts with DCDC1. Interacts with LRRK2; interaction facilitates phosphorylation of Thr-72. Interacts with RAB31P, GDI1, GDI2, CHM, CHML, RABGGTA, RABGGTB, TBC1D15 and INPP5B; these interactions are dependent on Thr-72 not being phosphorylated. Interacts with RILPL1 and RILPL2; these interactions are dependent on the phosphorylation of Thr-72 by LRRK2. Interacts with DZIP1; prevents inhibition by the GDP-dissociation inhibitor GDI2. Interacts with RAB3IP/Rabin8, RAB3IP functions as guanine exchange factor (GEF) towards RAB8A. Interacts (in GDP-bound form) with RPGR, RPGR functions as GEF towards RAB8A. The cofactor is Mg(2+). Post-translationally, phosphorylation of Thr-72 in the switch II region by LRRK2 prevents the association of RAB regulatory proteins, including CHM, CHML and RAB GDP dissociation inhibitors GDI1 and GDI2. Phosphorylation by LRRK2 is required for localization to stressed lysosomes.

Its subcellular location is the cell membrane. The protein resides in the golgi apparatus. It is found in the endosome membrane. The protein localises to the recycling endosome membrane. It localises to the cell projection. Its subcellular location is the cilium. The protein resides in the cytoplasmic vesicle. It is found in the phagosome membrane. The protein localises to the cytoplasm. It localises to the cytoskeleton. Its subcellular location is the microtubule organizing center. The protein resides in the centrosome. It is found in the centriole. The protein localises to the cilium basal body. It localises to the midbody. Its subcellular location is the lysosome. It carries out the reaction GTP + H2O = GDP + phosphate + H(+). Regulated by guanine nucleotide exchange factors (GEFs) such as RAB3IP/Rabin8 and RPGR which promote the exchange of bound GDP for free GTP, GTPase activating proteins (GAPs) which increase the GTP hydrolysis activity, and GDP dissociation inhibitors (GDIs) which inhibit the dissociation of the nucleotide from the GTPase. Activated in response to insulin. Functionally, the small GTPases Rab are key regulators of intracellular membrane trafficking, from the formation of transport vesicles to their fusion with membranes. Rabs cycle between an inactive GDP-bound form and an active GTP-bound form that is able to recruit to membranes different sets of downstream effectors directly responsible for vesicle formation, movement, tethering and fusion. RAB8A is involved in polarized vesicular trafficking and neurotransmitter release. Together with RAB11A, RAB3IP, the exocyst complex, PARD3, PRKCI, ANXA2, CDC42 and DNMBP promotes transcytosis of PODXL to the apical membrane initiation sites (AMIS), apical surface formation and lumenogenesis. Regulates the compacted morphology of the Golgi. Together with MYO5B and RAB11A participates in epithelial cell polarization. Also involved in membrane trafficking to the cilium and ciliogenesis. Together with MICALL2, may also regulate adherens junction assembly. May play a role in insulin-induced transport to the plasma membrane of the glucose transporter GLUT4 and therefore play a role in glucose homeostasis. Involved in autophagy. Participates in the export of a subset of neosynthesized proteins through a Rab8-Rab10-Rab11-dependent endososomal export route. Targeted to and stabilized on stressed lysosomes through LRRK2 phosphorylation. Suppresses stress-induced lysosomal enlargement through EHBP1 and EHNP1L1 effector proteins. This is Ras-related protein Rab-8A from Mus musculus (Mouse).